The sequence spans 370 residues: tRNA-specific 2-thiouridylase MnmA (370 aa).

ATP contacts are provided by residues 24-31 and leucine 50; that span reads AMSGGVDS. The active-site Nucleophile is cysteine 119. Cysteine 119 and cysteine 215 are oxidised to a cystine. Glycine 143 provides a ligand contact to ATP. The interaction with tRNA stretch occupies residues 165–167; sequence KDQ. Cysteine 215 functions as the Cysteine persulfide intermediate in the catalytic mechanism.

The protein belongs to the MnmA/TRMU family.

The protein resides in the cytoplasm. It catalyses the reaction S-sulfanyl-L-cysteinyl-[protein] + uridine(34) in tRNA + AH2 + ATP = 2-thiouridine(34) in tRNA + L-cysteinyl-[protein] + A + AMP + diphosphate + H(+). In terms of biological role, catalyzes the 2-thiolation of uridine at the wobble position (U34) of tRNA, leading to the formation of s(2)U34. This is tRNA-specific 2-thiouridylase MnmA from Wolbachia sp. subsp. Drosophila simulans (strain wRi).